The sequence spans 213 residues: Flagellar transcriptional regulator FlhC (213 aa).

Cysteine 138, cysteine 141, cysteine 158, and cysteine 161 together coordinate Zn(2+).

Belongs to the FlhC family. As to quaternary structure, heterohexamer composed of two FlhC and four FlhD subunits. Each FlhC binds a FlhD dimer, forming a heterotrimer, and a hexamer assembles by dimerization of two heterotrimers. Zn(2+) serves as cofactor.

Its subcellular location is the cytoplasm. Functions in complex with FlhD as a master transcriptional regulator that regulates transcription of several flagellar and non-flagellar operons by binding to their promoter region. Activates expression of class 2 flagellar genes, including fliA, which is a flagellum-specific sigma factor that turns on the class 3 genes. Also regulates genes whose products function in a variety of physiological pathways. In Cupriavidus metallidurans (strain ATCC 43123 / DSM 2839 / NBRC 102507 / CH34) (Ralstonia metallidurans), this protein is Flagellar transcriptional regulator FlhC.